We begin with the raw amino-acid sequence, 2138 residues long: DNA polymerase epsilon catalytic subunit B (2138 aa).

A Nuclear localization signal 1 motif is present at residues 1224–1231 (EKRKWKMT). Zn(2+) contacts are provided by cysteine 2015, cysteine 2018, cysteine 2040, and cysteine 2045. The CysA-type zinc finger occupies 2015–2045 (CSNCGAYRDLDFCRDSALLTEKEWSCADPQC). [4Fe-4S] cluster-binding residues include cysteine 2076, cysteine 2079, cysteine 2091, and cysteine 2093. A CysB motif motif is present at residues 2076-2093 (CNRCNQVKAAHLTEQCEC). Residues 2107 to 2114 (HKRIEIFL) carry the Nuclear localization signal 2 motif.

The protein belongs to the DNA polymerase type-B family. Heterotetramer. The cofactor is [4Fe-4S] cluster. Mostly expressed at low levels in inflorescence (floral meristem and flowers until anthesis), and, to a lower extent, in seeds.

The protein resides in the nucleus. The catalysed reaction is DNA(n) + a 2'-deoxyribonucleoside 5'-triphosphate = DNA(n+1) + diphosphate. In terms of biological role, DNA polymerase II, which participates in chromosomal DNA replication. Involved in the determination of cell fate during plant embryogenesis. Contributes to the flowering time repression. The sequence is that of DNA polymerase epsilon catalytic subunit B (POL2B) from Arabidopsis thaliana (Mouse-ear cress).